The chain runs to 576 residues: Enolase 4 (576 aa).

The disordered stretch occupies residues 187-232; sequence ELRNEAMSEAPPQATPTSAPAKDKKGNDKGKKGNITENPLPPAEPP. The segment covering 196–206 has biased composition (low complexity); that stretch reads APPQATPTSAP. Positions 207-217 are enriched in basic and acidic residues; sequence AKDKKGNDKGK. 2 residues coordinate substrate: Glu302 and Lys524.

It belongs to the enolase family.

The enzyme catalyses (2R)-2-phosphoglycerate = phosphoenolpyruvate + H2O. It functions in the pathway carbohydrate degradation; glycolysis; pyruvate from D-glyceraldehyde 3-phosphate: step 4/5. The sequence is that of Enolase 4 (eno4) from Danio rerio (Zebrafish).